An 892-amino-acid chain; its full sequence is DNA mismatch repair protein MutS (892 aa).

An ATP-binding site is contributed by 634 to 641 (GPNMGGKS).

The protein belongs to the DNA mismatch repair MutS family.

This protein is involved in the repair of mismatches in DNA. It is possible that it carries out the mismatch recognition step. This protein has a weak ATPase activity. The chain is DNA mismatch repair protein MutS from Paraburkholderia phymatum (strain DSM 17167 / CIP 108236 / LMG 21445 / STM815) (Burkholderia phymatum).